Here is a 96-residue protein sequence, read N- to C-terminus: UPF0235 protein PC1_3453 (96 aa).

Belongs to the UPF0235 family.

In Pectobacterium carotovorum subsp. carotovorum (strain PC1), this protein is UPF0235 protein PC1_3453.